The following is a 467-amino-acid chain: Protection of telomeres protein 1a (467 aa).

It belongs to the telombin family. In terms of assembly, component of the telomerase holoenzyme complex at least composed of TERT, CBF5 and POT1a. The RNA molecule associated to the telomerase complex, and providing a template for telomeric DNA synthesis, is most likely TR and not TER1 as described previously. Interacts with the N-terminal part of TERT. Interacts with CBF5. Interacts with CTC1 and STN1. Does not interact with TEN1. Expressed in roots, rosette leaves, cauline leaves, stems and flowers.

The protein localises to the nucleus. Its subcellular location is the chromosome. The protein resides in the telomere. It localises to the nucleolus. It is found in the cytoplasm. Functionally, component of the telomerase ribonucleoprotein (RNP) complex that is essential for the positive regulation of telomere length. Binds RNA non-specifically. Binds specifically single-stranded telomeric DNA. Not required to recruit telomerase to telomeres, but stimulates TER1 RNP repeat addition processivity. The chain is Protection of telomeres protein 1a from Arabidopsis thaliana (Mouse-ear cress).